We begin with the raw amino-acid sequence, 668 residues long: ATP-dependent RNA helicase MSS116, mitochondrial (668 aa).

Residues 1 to 38 (MLKQLSRSLGIRSSPIVANLIRSKQVCTRGFHISLVKQ) constitute a mitochondrion transit peptide. A Q motif motif is present at residues 87–115 (DFKGKGYIHDSIINSLHKNDFKELTPIQQ). The 182-residue stretch at 119–300 (VPIFNTEKGL…KKHIHPEYEF (182 aa)) folds into the Helicase ATP-binding domain. 132–139 (AKTGTGKT) provides a ligand contact to ATP. The DEAD box signature appears at 242–245 (DEAD). A Helicase C-terminal domain is found at 332-501 (SLSELHGIMK…NIIDQIESPL (170 aa)). Positions 585–668 (YSDFSRSGMS…EHRRIRDHDE (84 aa)) are disordered. Residues 586-597 (SDFSRSGMSQRP) show a composition bias toward polar residues. Positions 609-636 (NGRGKYGNNRNNDWSYQNKNRYNNNNNR) are enriched in low complexity. Residues 637 to 668 (QTERSYDSDRKSHNDWKYEKKFEHRRIRDHDE) are compositionally biased toward basic and acidic residues.

This sequence belongs to the DEAD box helicase family. DDX18/HAS1 subfamily.

The protein localises to the mitochondrion matrix. The catalysed reaction is ATP + H2O = ADP + phosphate + H(+). Functionally, ATP-dependent RNA helicase required for mitochondrial splicing of group I and II introns. Also required for efficient mitochondrial translation. This Candida albicans (strain SC5314 / ATCC MYA-2876) (Yeast) protein is ATP-dependent RNA helicase MSS116, mitochondrial (MSS116).